The primary structure comprises 593 residues: Meiotic recombination protein REC8 homolog (593 aa).

Position 149 is a phosphoserine (S149). T164 carries the post-translational modification Phosphothreonine. The residue at position 192 (S192) is a Phosphoserine. Disordered regions lie at residues Q247–E282, E317–R344, and P422–T444. The segment covering D255 to E265 has biased composition (basic and acidic residues). Residues E432–T444 show a composition bias toward basic and acidic residues.

The protein belongs to the rad21 family. Interacts (phosphorylated and unphosphorylated form) with SMC3. Interacts with SYCP3. Interacts (phosphorylated and unphosphorylated form) with SMC1B. Does not interact with SMC1A. Interacts with RAD51. Forms a complex with EWSR1, PRDM9, SYCP3 and SYCP1; complex formation is dependent of phosphorylated form of REC8 and requires PRDM9 bound to hotspot DNA; EWSR1 joins PRDM9 with the chromosomal axis through REC8. In terms of processing, phosphorylated.

It is found in the nucleus. Its subcellular location is the chromosome. It localises to the centromere. In terms of biological role, required during meiosis for separation of sister chromatids and homologous chromosomes. Proteolytic cleavage of REC8 on chromosome arms by separin during anaphase I allows for homologous chromosome separation in meiosis I and cleavage of REC8 on centromeres during anaphase II allows for sister chromatid separation in meiosis II. The sequence is that of Meiotic recombination protein REC8 homolog from Rattus norvegicus (Rat).